A 1091-amino-acid chain; its full sequence is Protein CTR9 homolog (1091 aa).

Position 2 is an N-acetylalanine (Ala2). 16 TPR repeats span residues 90-127, 128-161, 163-195, 197-230, 232-267, 305-338, 343-376, 377-410, 412-443, 449-482, 558-591, 593-625, 640-673, 674-707, 713-746, and 749-782; these read GAYY…DMHE, PSTW…APDN, PALL…FPGC, AAVR…DPDN, EALV…YPYC, SHSF…TNNN, VFPY…YPDN, CETL…DPRD, QAFV…MKKG, IEVL…GIWI, IDAY…DDKN, NALS…TDGK, AAMR…HNSN, MYAA…ASGS, PDVW…FFYN, and SQIL…TPSN. Residues 919-1091 are disordered; the sequence is FQRIKEQWKS…EEEEEEEEAN (173 aa). A compositionally biased stretch (basic residues) spans 951–965; that stretch reads ERRRKKGGKRRKKDK. Composition is skewed to acidic residues over residues 974 to 993, 1003 to 1016, 1026 to 1035, and 1080 to 1091; these read DDEE…DEDA, MTTQ…DDDA, EDPDVDDDEV, and NMEEEEEEEEAN.

In terms of assembly, component of the nuclear PAF1 complex (PAF1C), which consists of VIP2/ELF7/PAF1, VIP3/SKI8/WDR61, VIP4/LEO1, VIP5/RTF1, VIP6/ELF8/CTR9 and CDC73. Interacts with VIP3 and VIP4. Expressed in roots, leaves and shoot apex.

The protein resides in the nucleus. In terms of biological role, component of the PAF1 complex (PAF1C) which is involved in histone modifications such as methylation on histone H3 'Lys-4' (H3K4me3). Involved in regulation of flowering time. Required for the expression of the MADS box genes and flowering repressors FLC, AGL27/FLM and AGL31/MAF2. Required for histone H3 trimethylation on 'Lys-4' H3K4me3 at the FLC and AGL27/FLM loci. Involved in the control of seed dormancy and germination. The protein is Protein CTR9 homolog of Arabidopsis thaliana (Mouse-ear cress).